The primary structure comprises 217 residues: Cytidylate kinase (217 aa).

10–18 (GPAGAGKST) provides a ligand contact to ATP.

The protein belongs to the cytidylate kinase family. Type 1 subfamily.

It localises to the cytoplasm. The catalysed reaction is CMP + ATP = CDP + ADP. The enzyme catalyses dCMP + ATP = dCDP + ADP. This Clostridium botulinum (strain ATCC 19397 / Type A) protein is Cytidylate kinase.